The chain runs to 413 residues: Divalent metal cation transporter MntH (413 aa).

Residues 1–19 (MTDNRVENSSGRAARKLRL) are Cytoplasmic-facing. The chain crosses the membrane as a helical span at residues 20-39 (ALMGPAFIAAIGYIDPGNFA). Topologically, residues 40–51 (TNIQAGASFGYQ) are periplasmic. The chain crosses the membrane as a helical span at residues 52 to 71 (LLWVVVWANLMAMLIQILSA). The Cytoplasmic portion of the chain corresponds to 72-95 (KLGIATGKNLAEQIRDHYPRPVVW). A helical membrane pass occupies residues 96-118 (FYWVQAEIIAMATDLAEFIGAAI). Residues 119-125 (GFKLILG) lie on the Periplasmic side of the membrane. The chain crosses the membrane as a helical span at residues 126-145 (VSLLQGAVLTGIATFLILML). The Cytoplasmic segment spans residues 146-155 (QRRGQKPLEK). The chain crosses the membrane as a helical span at residues 156–175 (VIGGLLLFVAAAYIVELFFS). The Periplasmic portion of the chain corresponds to 176–196 (QPDMAQLGKGMVIPALPNPEA). Residues 197 to 220 (VFLAAGVLGATIMPHVIYLHSSLT) traverse the membrane as a helical segment. At 221 to 238 (QHLHGGTRQQRYSATKWD) the chain is on the cytoplasmic side. The helical transmembrane segment at 239 to 258 (VAIAMTIAGFVNLAMMATAA) threads the bilayer. Residues 259–276 (AAFHFSGHTGIADLDQAY) lie on the Periplasmic side of the membrane. The chain crosses the membrane as a helical span at residues 277-297 (LTLEPLLSHAAATVFGLSLVA). The Cytoplasmic portion of the chain corresponds to 298-327 (AGLSSTVVGTLAGQVVMQGFVRFHIPLWVR). A helical transmembrane segment spans residues 328–344 (RTITMLPSFIVILMGLD). Residues 345-350 (PTRILV) lie on the Periplasmic side of the membrane. A helical transmembrane segment spans residues 351 to 370 (MSQVLLSFGIALALVPLLIF). At 371–387 (TSNATLMGELVNTRRVK) the chain is on the cytoplasmic side. The helical transmembrane segment at 388–406 (QIGWIIVVLVVALNIWLLV) threads the bilayer. Over 407–413 (GTVMGLS) the chain is Periplasmic.

Belongs to the NRAMP family.

It is found in the cell inner membrane. H(+)-stimulated, divalent metal cation uptake system. The protein is Divalent metal cation transporter MntH of Salmonella schwarzengrund (strain CVM19633).